Here is a 146-residue protein sequence, read N- to C-terminus: 3-dehydroquinate dehydratase (146 aa).

Catalysis depends on Tyr-23, which acts as the Proton acceptor. Residues Asn-74, His-80, and Asp-87 each contribute to the substrate site. His-100 serves as the catalytic Proton donor. Substrate is bound by residues 101-102 (IS) and Arg-111.

The protein belongs to the type-II 3-dehydroquinase family. In terms of assembly, homododecamer.

It carries out the reaction 3-dehydroquinate = 3-dehydroshikimate + H2O. It participates in metabolic intermediate biosynthesis; chorismate biosynthesis; chorismate from D-erythrose 4-phosphate and phosphoenolpyruvate: step 3/7. Its function is as follows. Catalyzes a trans-dehydration via an enolate intermediate. This Bacillus cereus (strain ATCC 14579 / DSM 31 / CCUG 7414 / JCM 2152 / NBRC 15305 / NCIMB 9373 / NCTC 2599 / NRRL B-3711) protein is 3-dehydroquinate dehydratase.